The following is a 790-amino-acid chain: IQ motif and ubiquitin-like domain-containing protein (790 aa).

A compositionally biased stretch (polar residues) spans 1–17 (MSNQPKKYETQNIANST). Residues 1–49 (MSNQPKKYETQNIANSTEESDAFDIVTIPVPSEEPQESDQTEEHESGIE) form a disordered region. One can recognise a Ubiquitin-like domain in the interval 130–206 (ATVKVVLIPV…IQVEIFSTNP (77 aa)). The IQ domain occupies 337 to 366 (RLKAVIVIQTYYRQWHAKIFVEDLRRQKSL).

As to quaternary structure, component of the axonemal radial spoke 1 (RS1) complex, at least composed of spoke head proteins RSPH1, RSPH3, RSPH9 and the cilia-specific component RSPH4A or sperm-specific component RSPH6A, spoke stalk proteins RSPH14, DNAJB13, DYDC1, ROPN1L and NME5, and the anchor protein IQUB. Does not appear to be part of radial spoke complexes 2 or 3 (RS2 or RS3). Interacts with CALM1. Interacts with DNAJB13. Interacts with DYNLL2. Interacts with NME5. Interacts with RSPH3. Interacts with RSPH9. Interacts with ZMYND10. Interacts with calmodulin; the interaction occurs in conditions of low but not high calcium.

The protein localises to the cytoplasm. It is found in the cytoskeleton. The protein resides in the flagellum axoneme. It localises to the cell projection. Its subcellular location is the cilium. Functionally, adapter protein that anchors the radial spoke 1 (RS1) complex to the A microtubule of outer doublet microtubules in axonemes. The triple radial spokes (RS1, RS2 and RS3) are required to modulate beating of the sperm flagellum. May play a role in inhibiting signaling via MAPK1/ERK2 and MAPK3/ERK1. Additionally, may play a role in the functioning of cilia. Not required for the functioning of tracheal or ependymal cilia. The chain is IQ motif and ubiquitin-like domain-containing protein (IQUB) from Macaca fascicularis (Crab-eating macaque).